The following is a 131-amino-acid chain: Small ribosomal subunit protein uS8 (131 aa).

This sequence belongs to the universal ribosomal protein uS8 family. As to quaternary structure, part of the 30S ribosomal subunit. Contacts proteins S5 and S12.

One of the primary rRNA binding proteins, it binds directly to 16S rRNA central domain where it helps coordinate assembly of the platform of the 30S subunit. The sequence is that of Small ribosomal subunit protein uS8 from Wolbachia sp. subsp. Brugia malayi (strain TRS).